Reading from the N-terminus, the 792-residue chain is Phenylalanine--tRNA ligase beta subunit (792 aa).

One can recognise a tRNA-binding domain in the interval 39 to 147 (GEALDLILVA…EDAPIGTPLA (109 aa)). The 76-residue stretch at 400–475 (PAPASILLRR…RIRGYEHLPT (76 aa)) folds into the B5 domain. The Mg(2+) site is built by D453, D459, E462, and E463. One can recognise an FDX-ACB domain in the interval 698-791 (SRFPFVRRDL…IQQRHDVRIR (94 aa)).

The protein belongs to the phenylalanyl-tRNA synthetase beta subunit family. Type 1 subfamily. As to quaternary structure, tetramer of two alpha and two beta subunits. Requires Mg(2+) as cofactor.

It is found in the cytoplasm. The enzyme catalyses tRNA(Phe) + L-phenylalanine + ATP = L-phenylalanyl-tRNA(Phe) + AMP + diphosphate + H(+). In Xylella fastidiosa (strain Temecula1 / ATCC 700964), this protein is Phenylalanine--tRNA ligase beta subunit.